A 187-amino-acid chain; its full sequence is Large ribosomal subunit protein eL18B (187 aa).

A Phosphothreonine modification is found at threonine 134. Serine 136 bears the Phosphoserine mark.

This sequence belongs to the eukaryotic ribosomal protein eL18 family. As to quaternary structure, component of the large ribosomal subunit (LSU). Mature yeast ribosomes consist of a small (40S) and a large (60S) subunit. The 40S small subunit contains 1 molecule of ribosomal RNA (18S rRNA) and at least 33 different proteins. The large 60S subunit contains 3 rRNA molecules (25S, 5.8S and 5S rRNA) and at least 46 different proteins. eL18 interacts with NAP1.

The protein resides in the cytoplasm. Component of the ribosome, a large ribonucleoprotein complex responsible for the synthesis of proteins in the cell. The small ribosomal subunit (SSU) binds messenger RNAs (mRNAs) and translates the encoded message by selecting cognate aminoacyl-transfer RNA (tRNA) molecules. The large subunit (LSU) contains the ribosomal catalytic site termed the peptidyl transferase center (PTC), which catalyzes the formation of peptide bonds, thereby polymerizing the amino acids delivered by tRNAs into a polypeptide chain. The nascent polypeptides leave the ribosome through a tunnel in the LSU and interact with protein factors that function in enzymatic processing, targeting, and the membrane insertion of nascent chains at the exit of the ribosomal tunnel. The sequence is that of Large ribosomal subunit protein eL18B (rpl1802) from Schizosaccharomyces pombe (strain 972 / ATCC 24843) (Fission yeast).